The chain runs to 296 residues: MLENLATEERNEKTIDLDTLSPKEILAVMNEEDLTVPIAIKKVLPQIELIVSGVISCFQKGGRLIYLGAGTSGRLGVLDAAECVPTFGVSKEQVIGLIAGGEKAFVAAIEGAEDSKILGENDLKQIKLTANDFVIGIAASGRTPYVIGALDYAKSVGAKTGAISCNANAKISAHADIAVEVVTGAEILTGSTRLKAGTAQKLVLNMISTASMVGIGKVYKNLMVDVLPTNKKLEERSKRIIMEATEADYETANKFYEAAEKHVKVAIVMILTNSTKEIALEKLSEAKGFVRNTIQK.

Residues 54–217 (VISCFQKGGR…STASMVGIGK (164 aa)) form the SIS domain. The active-site Proton donor is E82. The active site involves E113.

This sequence belongs to the GCKR-like family. MurNAc-6-P etherase subfamily. Homodimer.

The catalysed reaction is N-acetyl-D-muramate 6-phosphate + H2O = N-acetyl-D-glucosamine 6-phosphate + (R)-lactate. Its pathway is amino-sugar metabolism; N-acetylmuramate degradation. Its function is as follows. Specifically catalyzes the cleavage of the D-lactyl ether substituent of MurNAc 6-phosphate, producing GlcNAc 6-phosphate and D-lactate. This chain is N-acetylmuramic acid 6-phosphate etherase, found in Listeria monocytogenes serotype 4b (strain CLIP80459).